A 264-amino-acid polypeptide reads, in one-letter code: S-adenosylmethionine decarboxylase proenzyme (264 aa).

Serine 113 serves as the catalytic Schiff-base intermediate with substrate; via pyruvic acid. At serine 113 the chain carries Pyruvic acid (Ser); by autocatalysis. The active-site Proton acceptor; for processing activity is the histidine 118. Cysteine 141 (proton donor; for catalytic activity) is an active-site residue.

The protein belongs to the prokaryotic AdoMetDC family. Type 2 subfamily. Heterooctamer of four alpha and four beta chains arranged as a tetramer of alpha/beta heterodimers. The cofactor is pyruvate. Is synthesized initially as an inactive proenzyme. Formation of the active enzyme involves a self-maturation process in which the active site pyruvoyl group is generated from an internal serine residue via an autocatalytic post-translational modification. Two non-identical subunits are generated from the proenzyme in this reaction, and the pyruvate is formed at the N-terminus of the alpha chain, which is derived from the carboxyl end of the proenzyme. The post-translation cleavage follows an unusual pathway, termed non-hydrolytic serinolysis, in which the side chain hydroxyl group of the serine supplies its oxygen atom to form the C-terminus of the beta chain, while the remainder of the serine residue undergoes an oxidative deamination to produce ammonia and the pyruvoyl group blocking the N-terminus of the alpha chain.

It catalyses the reaction S-adenosyl-L-methionine + H(+) = S-adenosyl 3-(methylsulfanyl)propylamine + CO2. Its pathway is amine and polyamine biosynthesis; S-adenosylmethioninamine biosynthesis; S-adenosylmethioninamine from S-adenosyl-L-methionine: step 1/1. Functionally, catalyzes the decarboxylation of S-adenosylmethionine to S-adenosylmethioninamine (dcAdoMet), the propylamine donor required for the synthesis of the polyamines spermine and spermidine from the diamine putrescine. The protein is S-adenosylmethionine decarboxylase proenzyme of Xylella fastidiosa (strain 9a5c).